Here is a 231-residue protein sequence, read N- to C-terminus: Small ribosomal subunit protein uS3 (231 aa).

Positions 39-107 (IRKFLKAKLY…DVTINIKEER (69 aa)) constitute a KH type-2 domain.

It belongs to the universal ribosomal protein uS3 family. Part of the 30S ribosomal subunit. Forms a tight complex with proteins S10 and S14.

Functionally, binds the lower part of the 30S subunit head. Binds mRNA in the 70S ribosome, positioning it for translation. In Campylobacter hominis (strain ATCC BAA-381 / DSM 21671 / CCUG 45161 / LMG 19568 / NCTC 13146 / CH001A), this protein is Small ribosomal subunit protein uS3.